An 84-amino-acid chain; its full sequence is Large ribosomal subunit protein eL34 (84 aa).

The protein belongs to the eukaryotic ribosomal protein eL34 family.

In Pyrobaculum islandicum (strain DSM 4184 / JCM 9189 / GEO3), this protein is Large ribosomal subunit protein eL34.